Here is a 267-residue protein sequence, read N- to C-terminus: Tryptophan synthase alpha chain (267 aa).

Catalysis depends on proton acceptor residues E49 and D60.

The protein belongs to the TrpA family. As to quaternary structure, tetramer of two alpha and two beta chains.

The catalysed reaction is (1S,2R)-1-C-(indol-3-yl)glycerol 3-phosphate + L-serine = D-glyceraldehyde 3-phosphate + L-tryptophan + H2O. It functions in the pathway amino-acid biosynthesis; L-tryptophan biosynthesis; L-tryptophan from chorismate: step 5/5. Its function is as follows. The alpha subunit is responsible for the aldol cleavage of indoleglycerol phosphate to indole and glyceraldehyde 3-phosphate. This is Tryptophan synthase alpha chain from Solibacter usitatus (strain Ellin6076).